A 380-amino-acid chain; its full sequence is O-phospho-L-seryl-tRNA:Cys-tRNA synthase (380 aa).

Residues 86-87 (AR), Asn192, and 215-217 (SGH) each bind pyridoxal 5'-phosphate. The residue at position 218 (Lys218) is an N6-(pyridoxal phosphate)lysine.

This sequence belongs to the SepCysS family. In terms of assembly, homodimer. Interacts with SepRS. Pyridoxal 5'-phosphate serves as cofactor.

It carries out the reaction O-phospho-L-seryl-tRNA(Cys) + hydrogen sulfide + H(+) = L-cysteinyl-tRNA(Cys) + phosphate. Its function is as follows. Converts O-phospho-L-seryl-tRNA(Cys) (Sep-tRNA(Cys)) to L-cysteinyl-tRNA(Cys) (Cys-tRNA(Cys)). The sequence is that of O-phospho-L-seryl-tRNA:Cys-tRNA synthase from Methanococcus maripaludis (strain DSM 14266 / JCM 13030 / NBRC 101832 / S2 / LL).